The following is a 274-amino-acid chain: MKLYMSVDMEGISGLPDDTFVDSGKRNYERGRLIMTEEANYCIAEAFNSGCTEVLVNDSHSKMNNLMVEKLHPEADLISGDVKPFSMVEGLDDTFRGALFLGYHARASTPGVMSHSMIFGVRHFYINDRPVGELGLNAYVAGYYDVPVLMVAGDDRAAKEAEELIPNVTTAAVKQTISRSAVKCLSPAKAGRLLTEKTAFALQNKDKVKPLTPPDRPVLSIEFANYGQAEWANLMPGTEIKTGTTTVQFQAKDMLEAYQAMLVMTELAMRTSFC.

Residues D8, E10, H60, and H104 each contribute to the Zn(2+) site. H115 serves as the catalytic Nucleophile. Residue E133 participates in Zn(2+) binding.

Belongs to the peptidase M55 family. In terms of assembly, homodecamer. A 20 Angstroms wide channel runs through the complex, giving access to a central chamber holding the active sites. The cofactor is Zn(2+).

In terms of biological role, hydrolyzes N-terminal residues in D-amino acid containing peptides. Among the tested substrates, the highest activities are with D-Ala-D-Ala and D-Ala-Gly-Gly. The physiological role is not clear. In Bacillus subtilis (strain 168), this protein is D-aminopeptidase (dppA).